The following is a 421-amino-acid chain: L-evernosamine nitrososynthase (421 aa).

It belongs to the acyl-CoA dehydrogenase family. As to quaternary structure, homotetramer. FAD is required as a cofactor.

The enzyme catalyses dTDP-beta-L-evernosamine + 2 NADPH + 2 O2 + H(+) = dTDP-2,3,6-trideoxy-3-C-methyl-4-O-methyl-3-nitroso-beta-L-arabino-hexopyranose + 2 NADP(+) + 3 H2O. It catalyses the reaction dTDP-beta-L-evernosamine + NADPH + O2 = dTDP-N-hydroxy-beta-L-evernosamine + NADP(+) + H2O. The catalysed reaction is dTDP-N-hydroxy-beta-L-evernosamine + NADPH + O2 + H(+) = dTDP-2,3,6-trideoxy-3-C-methyl-4-O-methyl-3-nitroso-beta-L-arabino-hexopyranose + NADP(+) + 2 H2O. It participates in antibiotic biosynthesis. Nitrososynthase involved in the biosynthesis of everninomicin, a broad spectrum orthosomycin antibiotic. Catalyzes the double-oxidation of TDP-L-evernosamine to TDP-L-evernitrosose. The enzyme first oxidizes the substrate to a transient hydroxylamino intermediate, which is then further oxidized to nitroso sugar. The nitroso group is probably spontaneously oxidized giving TDP-L-evernitrose. In vitro, catalyzes the double-oxidation of TDP-L-epi-vancosamine to TDP-L-epi-vancosonitrose. Can also use biosynthetic progenitors of TDP-L-epi-vancosamine, but progenitors solely undergo single-oxidation reactions and terminate in the hydroxylamine oxidation state. The protein is L-evernosamine nitrososynthase of Micromonospora sp. (strain ATCC 39149 / NRRL 15099 / SCC 1413).